Here is a 196-residue protein sequence, read N- to C-terminus: Chorion protein S19 (196 aa).

Positions 1–16 are cleaved as a signal peptide; sequence MNTFATLAIFISACLA.

Belongs to the chorion protein S19 family.

It localises to the secreted. Functionally, chorion membrane (egg shell) protein; plays a role in protecting the egg from the environment. The chain is Chorion protein S19 (Cp19) from Drosophila grimshawi (Hawaiian fruit fly).